The following is a 249-amino-acid chain: Isoprenyl transferase (249 aa).

D25 is a catalytic residue. D25 contacts Mg(2+). Residues 26–29, W30, R38, H42, and 70–72 contribute to the substrate site; these read GNGR and STE. The active-site Proton acceptor is N73. Substrate is bound by residues W74, R76, R197, and 203-205; that span reads RLS. E216 is a binding site for Mg(2+).

The protein belongs to the UPP synthase family. In terms of assembly, homodimer. Mg(2+) is required as a cofactor.

Its function is as follows. Catalyzes the condensation of isopentenyl diphosphate (IPP) with allylic pyrophosphates generating different type of terpenoids. The sequence is that of Isoprenyl transferase from Streptococcus pyogenes serotype M1.